The sequence spans 551 residues: E-selectin (551 aa).

The N-terminal stretch at 1–23 (MVASWLLSTLTFALVLLIKETST) is a signal peptide. In terms of domain architecture, C-type lectin spans 24–141 (WTYHFSAENM…CSKKKLALCY (118 aa)). At 24 to 495 (WTYHFSAENM…CEEPIASNVP (472 aa)) the chain is on the extracellular side. N-linked (GlcNAc...) asparagine glycans are attached at residues asparagine 32 and asparagine 45. Cystine bridges form between cysteine 42–cysteine 140, cysteine 113–cysteine 132, cysteine 145–cysteine 156, cysteine 150–cysteine 165, cysteine 167–cysteine 176, cysteine 182–cysteine 226, cysteine 195–cysteine 208, cysteine 212–cysteine 239, cysteine 244–cysteine 288, cysteine 257–cysteine 270, cysteine 274–cysteine 301, cysteine 306–cysteine 351, cysteine 337–cysteine 364, cysteine 369–cysteine 414, cysteine 400–cysteine 427, cysteine 432–cysteine 473, and cysteine 459–cysteine 486. 3 residues coordinate Ca(2+): glutamate 103, asparagine 105, and glutamate 111. Residues 103 to 111 (EPNNKQNNE), 115 to 120 (EIYIKR), and 128 to 130 (NDE) each bind a carbohydrate. Ca(2+) contacts are provided by asparagine 128 and aspartate 129. Residues 142–177 (TAACTEASCSGHGECIETINNYSCKCYPGFSGLKCE) form the EGF-like domain. Asparagine 162 is a glycosylation site (N-linked (GlcNAc...) asparagine). 5 consecutive Sushi domains span residues 180–241 (VTCE…TCKV), 242–303 (VECD…TCKA), 305–366 (SCDT…VCEA), 368–429 (KCDP…SCQV), and 430–488 (VQCP…TCEE). N-linked (GlcNAc...) asparagine glycans are attached at residues asparagine 194, asparagine 201, and asparagine 205. Asparagine 267 carries N-linked (GlcNAc...) asparagine glycosylation. Residues asparagine 314, asparagine 321, and asparagine 334 are each glycosylated (N-linked (GlcNAc...) asparagine). N-linked (GlcNAc...) asparagine glycans are attached at residues asparagine 442 and asparagine 466. The chain crosses the membrane as a helical span at residues 496–517 (LAVGLSVSGTSFLTLTSFLLWF). At 518-551 (LKYFRKKAKKFVPASSRYVGLEAHGNCQVPSHLI) the chain is on the cytoplasmic side.

Belongs to the selectin/LECAM family. In terms of assembly, interacts with SELPLG/PSGL1 and PODXL2 through the sialyl Lewis X epitope. SELPLG sulfation appears not to be required for this interaction.

It localises to the cell membrane. Functionally, cell-surface glycoprotein having a role in immunoadhesion. Mediates in the adhesion of blood neutrophils in cytokine-activated endothelium through interaction with SELPLG/PSGL1. May have a role in capillary morphogenesis. This is E-selectin (SELE) from Oryctolagus cuniculus (Rabbit).